Here is a 218-residue protein sequence, read N- to C-terminus: Acetoacetyl-CoA:acetate/butyrate CoA transferase alpha subunit (218 aa).

CoA is bound at residue 24–30 (GGFLNCG).

Belongs to the 3-oxoacid CoA-transferase subunit A family. In terms of assembly, heterotetramer composed of two alpha subunits (CtfA) and two beta subunits (CtfB).

It carries out the reaction acetoacetate + butanoyl-CoA = acetoacetyl-CoA + butanoate. The enzyme catalyses acetoacetate + acetyl-CoA = acetoacetyl-CoA + acetate. With respect to regulation, the acetate and butyrate conversion reactions are inhibited in vitro by physiological levels of acetone and butanol. In terms of biological role, catalyzes the transfer of CoA from acetoacetyl-CoA to acetate, butyrate and propionate. Also shows low activity with valerate, isobutyrate and crotonate. Plays an important role in the metabolic shift between the acid-producing and solvent-forming states of C.acetobutylicum. Acts mainly to detoxify the medium by removing the acetate and butyrate excreted earlier in the fermentation. The polypeptide is Acetoacetyl-CoA:acetate/butyrate CoA transferase alpha subunit (Clostridium acetobutylicum (strain ATCC 824 / DSM 792 / JCM 1419 / IAM 19013 / LMG 5710 / NBRC 13948 / NRRL B-527 / VKM B-1787 / 2291 / W)).